Reading from the N-terminus, the 309-residue chain is 2-oxoacid:ferredoxin oxidoreductase 2, subunit beta (309 aa).

[4Fe-4S] cluster contacts are provided by Cys17, Cys20, and Cys51. Thiamine diphosphate is bound by residues 49–52 and His68; that span reads IGCS. Asp93 serves as a coordination point for Mg(2+). 94–95 is a binding site for thiamine diphosphate; that stretch reads GD. Positions 121 and 123 each coordinate Mg(2+). 125–126 provides a ligand contact to thiamine diphosphate; sequence GL. Cys200 lines the [4Fe-4S] cluster pocket.

In terms of assembly, heterodimer composed of an alpha and a beta subunit. It depends on [4Fe-4S] cluster as a cofactor. Requires thiamine diphosphate as cofactor. Mg(2+) is required as a cofactor.

The catalysed reaction is a 2-oxocarboxylate + 2 oxidized [2Fe-2S]-[ferredoxin] + CoA = an acyl-CoA + 2 reduced [2Fe-2S]-[ferredoxin] + CO2 + H(+). Its function is as follows. Catalyzes the coenzyme A-dependent oxidative decarboxylation of different 2-oxoacids such as pyruvate, 2-oxobutyrate, glyoxylate and 2-oxoglutarate to form their CoA derivatives. The chain is 2-oxoacid:ferredoxin oxidoreductase 2, subunit beta from Aeropyrum pernix (strain ATCC 700893 / DSM 11879 / JCM 9820 / NBRC 100138 / K1).